Here is a 341-residue protein sequence, read N- to C-terminus: UDP-glucose 4-epimerase (341 aa).

Belongs to the polysaccharide synthase family.

The catalysed reaction is UDP-alpha-D-glucose = UDP-alpha-D-galactose. Epimerizes UDP-galactose to UDP-glucose. May contribute to formation of LPS or the exopolysaccharide slime layer by providing UDP-galactose as a substrate for either molecule. This chain is UDP-glucose 4-epimerase (capD), found in Rickettsia prowazekii (strain Madrid E).